Consider the following 132-residue polypeptide: Small ribosomal subunit protein uS8 (132 aa).

The protein belongs to the universal ribosomal protein uS8 family. As to quaternary structure, part of the 30S ribosomal subunit. Contacts proteins S5 and S12.

Its function is as follows. One of the primary rRNA binding proteins, it binds directly to 16S rRNA central domain where it helps coordinate assembly of the platform of the 30S subunit. This chain is Small ribosomal subunit protein uS8, found in Rhizobium etli (strain CIAT 652).